The chain runs to 486 residues: Maternal protein exuperantia (486 aa).

Disordered stretches follow at residues 202–233 (NARVDNDNEADSNSSSADKHVKNGLQKERDEF) and 386–477 (STIR…ISLP). The span at 218 to 233 (ADKHVKNGLQKERDEF) shows a compositional bias: basic and acidic residues. Residues 387 to 397 (TIRRRNKRNTP) show a composition bias toward basic residues. Polar residues-rich tracts occupy residues 420 to 437 (KSQSVSSVPDSTTKTPSP) and 464 to 476 (SALNNTAPASISL).

Functionally, ensures the proper localization of the mRNA of the bicoid gene to the anterior regions of the oocyte thus playing a fundamental role in the establishment of the polarity of the oocyte. May bind the bcd mRNA. In Drosophila virilis (Fruit fly), this protein is Maternal protein exuperantia (exu).